A 637-amino-acid polypeptide reads, in one-letter code: 1,4-alpha-glucan branching enzyme GlgB (637 aa).

The active-site Nucleophile is Asp307. Glu361 acts as the Proton donor in catalysis.

The protein belongs to the glycosyl hydrolase 13 family. GlgB subfamily. In terms of assembly, monomer.

It catalyses the reaction Transfers a segment of a (1-&gt;4)-alpha-D-glucan chain to a primary hydroxy group in a similar glucan chain.. Its pathway is glycan biosynthesis; glycogen biosynthesis. Functionally, catalyzes the formation of the alpha-1,6-glucosidic linkages in glycogen by scission of a 1,4-alpha-linked oligosaccharide from growing alpha-1,4-glucan chains and the subsequent attachment of the oligosaccharide to the alpha-1,6 position. The sequence is that of 1,4-alpha-glucan branching enzyme GlgB from Oceanobacillus iheyensis (strain DSM 14371 / CIP 107618 / JCM 11309 / KCTC 3954 / HTE831).